Reading from the N-terminus, the 173-residue chain is Streptothricin acetyltransferase A (173 aa).

In terms of domain architecture, N-acetyltransferase spans 21 to 173 (VVFGRMIPAF…EIAIFWYYKF (153 aa)).

The protein belongs to the acetyltransferase family. GNAT subfamily. In terms of assembly, homodimer.

The catalysed reaction is streptothricin D + acetyl-CoA = N(beta)-acetylstreptothricin D + CoA + H(+). It catalyses the reaction streptothricin F + acetyl-CoA = N(beta)-acetylstreptothricin F + CoA + H(+). Functionally, involved in resistance to streptothricin, a broad-spectrum antibiotic produced by streptomycetes. Detoxifies streptothricin via acetylation of the beta amino group of the first beta-lysyl moiety of streptothricin. This Bacillus subtilis (strain 168) protein is Streptothricin acetyltransferase A.